The primary structure comprises 288 residues: Glucose-1-phosphate thymidylyltransferase (288 aa).

Residues Asp-108 and Asp-223 each contribute to the Mg(2+) site.

This sequence belongs to the glucose-1-phosphate thymidylyltransferase family. In terms of assembly, homotetramer. Mg(2+) serves as cofactor.

It carries out the reaction dTTP + alpha-D-glucose 1-phosphate + H(+) = dTDP-alpha-D-glucose + diphosphate. Its function is as follows. Catalyzes the formation of dTDP-glucose, from dTTP and glucose 1-phosphate, as well as its pyrophosphorolysis. This Neisseria gonorrhoeae protein is Glucose-1-phosphate thymidylyltransferase (rmlA).